Reading from the N-terminus, the 412-residue chain is Aspartokinase (412 aa).

2 consecutive ACT domains span residues 266 to 340 (LTIR…GDTN) and 346 to 412 (IVGV…RQGE).

It belongs to the aspartokinase family.

The enzyme catalyses L-aspartate + ATP = 4-phospho-L-aspartate + ADP. Its pathway is amino-acid biosynthesis; L-lysine biosynthesis via DAP pathway; (S)-tetrahydrodipicolinate from L-aspartate: step 1/4. It functions in the pathway amino-acid biosynthesis; L-methionine biosynthesis via de novo pathway; L-homoserine from L-aspartate: step 1/3. It participates in amino-acid biosynthesis; L-threonine biosynthesis; L-threonine from L-aspartate: step 1/5. The polypeptide is Aspartokinase (lysC) (Pseudomonas aeruginosa (strain ATCC 15692 / DSM 22644 / CIP 104116 / JCM 14847 / LMG 12228 / 1C / PRS 101 / PAO1)).